A 318-amino-acid polypeptide reads, in one-letter code: Ribosomal large subunit pseudouridine synthase B (318 aa).

One can recognise an S4 RNA-binding domain in the interval 3–75 (EKLQKILARA…VCRVLAYYKP (73 aa)). D110 acts as the Nucleophile in catalysis. Positions 271-318 (AVKRHTEVSGRQVAGRQGSARKGSTRQNVGNAAPAATASRRSGPKKRG) are disordered.

The protein belongs to the pseudouridine synthase RsuA family.

The catalysed reaction is uridine(2605) in 23S rRNA = pseudouridine(2605) in 23S rRNA. In terms of biological role, responsible for synthesis of pseudouridine from uracil-2605 in 23S ribosomal RNA. This is Ribosomal large subunit pseudouridine synthase B (rluB) from Yersinia pestis.